A 235-amino-acid chain; its full sequence is Nitrile hydratase subunit beta (235 aa).

This sequence belongs to the nitrile hydratase subunit beta family. Heterodimer of an alpha and a beta chain.

The catalysed reaction is an aliphatic primary amide = an aliphatic nitrile + H2O. Functionally, NHase catalyzes the hydration of various nitrile compounds to the corresponding amides. This chain is Nitrile hydratase subunit beta (nthB), found in Rhodococcus sp.